The chain runs to 313 residues: Intracellular endo-alpha-(1-&gt;5)-L-arabinanase (313 aa).

Asp-27 functions as the Proton acceptor in the catalytic mechanism. Residues Asp-27, Gly-105, 144-147, and 164-166 contribute to the substrate site; these read NAID and SFW. Residue Glu-201 is the Proton donor of the active site. His-271 lines the Ca(2+) pocket.

This sequence belongs to the glycosyl hydrolase 43 family. In terms of assembly, monomer. It depends on Ca(2+) as a cofactor.

The protein localises to the cytoplasm. It catalyses the reaction Endohydrolysis of (1-&gt;5)-alpha-arabinofuranosidic linkages in (1-&gt;5)-arabinans.. It participates in glycan metabolism; L-arabinan degradation. Involved in the degradation of arabinan and is a key enzyme in the complete degradation of the plant cell wall. Catalyzes the cleavage of endo alpha-(1-&gt;5)-L-arabinofuranosyl residues in debranched arabinan. This chain is Intracellular endo-alpha-(1-&gt;5)-L-arabinanase (abn-ts), found in Geobacillus thermodenitrificans.